A 763-amino-acid polypeptide reads, in one-letter code: Putative pentatricopeptide repeat-containing protein At1g74580 (763 aa).

PPR repeat units lie at residues Thr-39–Asn-69, Leu-75–Pro-109, Thr-110–Pro-144, Asp-145–Met-179, Asn-180–Leu-214, Cys-215–Pro-249, Asn-250–Pro-284, Asp-285–Pro-319, Asp-320–Pro-354, Asp-355–Pro-389, Asn-390–Pro-424, Glu-425–Pro-459, Asp-460–Pro-494, Asp-495–Pro-529, Asn-530–Pro-564, Asp-565–Ala-595, Ser-601–Pro-635, Asp-636–Pro-670, and Ser-671–Pro-705.

This sequence belongs to the PPR family. P subfamily.

The polypeptide is Putative pentatricopeptide repeat-containing protein At1g74580 (Arabidopsis thaliana (Mouse-ear cress)).